A 208-amino-acid chain; its full sequence is UPF0637 protein BCQ_3749 (208 aa).

The protein belongs to the UPF0637 family.

The sequence is that of UPF0637 protein BCQ_3749 from Bacillus cereus (strain Q1).